The primary structure comprises 720 residues: Proline-rich receptor-like protein kinase PERK12 (720 aa).

Residues Met1–Gly240 are disordered. Over Met1–Thr246 the chain is Extracellular. Over residues Ser10–Thr25 the composition is skewed to pro residues. The span at Pro26 to Val35 shows a compositional bias: low complexity. Composition is skewed to pro residues over residues Leu52 to Ser84 and Pro92 to Pro116. Asn117 is a glycosylation site (N-linked (GlcNAc...) asparagine). 2 stretches are compositionally biased toward pro residues: residues Asn123 to Pro138 and Pro147 to Thr207. Residues Met247 to Val267 traverse the membrane as a helical segment. The Cytoplasmic segment spans residues Arg268–Phe720. Residues Gln300 to Ser349 are disordered. Positions Asn311–Gly330 are enriched in low complexity. Residues Phe371–Ala624 form the Protein kinase domain. ATP-binding positions include Leu377–Val385 and Lys399. Tyr444 is modified (phosphotyrosine). Asp495 serves as the catalytic Proton acceptor. Ser528 bears the Phosphoserine mark. Thr529 and Thr534 each carry phosphothreonine. Position 542 is a phosphotyrosine (Tyr542). A disordered region spans residues Ser698–Phe720.

This sequence belongs to the protein kinase superfamily. Ser/Thr protein kinase family. As to expression, mostly expressed in apical parts, including flower buds, and particularly in anthers. Also present in root hairs.

Its subcellular location is the cell membrane. The catalysed reaction is L-seryl-[protein] + ATP = O-phospho-L-seryl-[protein] + ADP + H(+). It carries out the reaction L-threonyl-[protein] + ATP = O-phospho-L-threonyl-[protein] + ADP + H(+). Functionally, regulates the auxin-related MAX (More Axillary Growth) pathway during the shoot branching. In Arabidopsis thaliana (Mouse-ear cress), this protein is Proline-rich receptor-like protein kinase PERK12 (PERK12).